The chain runs to 197 residues: Imidazoleglycerol-phosphate dehydratase (197 aa).

This sequence belongs to the imidazoleglycerol-phosphate dehydratase family.

Its subcellular location is the cytoplasm. It catalyses the reaction D-erythro-1-(imidazol-4-yl)glycerol 3-phosphate = 3-(imidazol-4-yl)-2-oxopropyl phosphate + H2O. Its pathway is amino-acid biosynthesis; L-histidine biosynthesis; L-histidine from 5-phospho-alpha-D-ribose 1-diphosphate: step 6/9. This Halorhodospira halophila (strain DSM 244 / SL1) (Ectothiorhodospira halophila (strain DSM 244 / SL1)) protein is Imidazoleglycerol-phosphate dehydratase.